The sequence spans 214 residues: uncharacterized protein (214 aa).

Residues 1–49 (MATRGAVAAAASTIWKHRRNPSLRSLSRHFNPNFNHRIIPTGFKYQVRA) constitute a chloroplast transit peptide.

It is found in the plastid. It localises to the chloroplast. This is an uncharacterized protein from Arabidopsis thaliana (Mouse-ear cress).